The chain runs to 567 residues: Dihydroxy-acid dehydratase 1 (567 aa).

C57 is a [2Fe-2S] cluster binding site. D89 is a Mg(2+) binding site. Residue C130 participates in [2Fe-2S] cluster binding. Mg(2+) is bound by residues D131 and K132. K132 carries the N6-carboxylysine modification. A [2Fe-2S] cluster-binding site is contributed by C202. E454 contributes to the Mg(2+) binding site. The Proton acceptor role is filled by S480.

It belongs to the IlvD/Edd family. As to quaternary structure, homodimer. It depends on [2Fe-2S] cluster as a cofactor. The cofactor is Mg(2+).

It carries out the reaction (2R)-2,3-dihydroxy-3-methylbutanoate = 3-methyl-2-oxobutanoate + H2O. It catalyses the reaction (2R,3R)-2,3-dihydroxy-3-methylpentanoate = (S)-3-methyl-2-oxopentanoate + H2O. Its pathway is amino-acid biosynthesis; L-isoleucine biosynthesis; L-isoleucine from 2-oxobutanoate: step 3/4. It participates in amino-acid biosynthesis; L-valine biosynthesis; L-valine from pyruvate: step 3/4. Functionally, functions in the biosynthesis of branched-chain amino acids. Catalyzes the dehydration of (2R,3R)-2,3-dihydroxy-3-methylpentanoate (2,3-dihydroxy-3-methylvalerate) into 2-oxo-3-methylpentanoate (2-oxo-3-methylvalerate) and of (2R)-2,3-dihydroxy-3-methylbutanoate (2,3-dihydroxyisovalerate) into 2-oxo-3-methylbutanoate (2-oxoisovalerate), the penultimate precursor to L-isoleucine and L-valine, respectively. The polypeptide is Dihydroxy-acid dehydratase 1 (Aromatoleum aromaticum (strain DSM 19018 / LMG 30748 / EbN1) (Azoarcus sp. (strain EbN1))).